We begin with the raw amino-acid sequence, 345 residues long: uncharacterized protein (345 aa).

A disordered region spans residues 1–98 (MNDEMKGKSG…ISGKSFIDPE (98 aa)). Basic and acidic residues-rich tracts occupy residues 18 to 27 (RSDDDSDKRT), 42 to 68 (SRADGGRRPARDDKQSQPRDRKWEDSP), and 76 to 86 (PGDETPEKADH).

Belongs to the class IV-like SAM-binding methyltransferase superfamily. RNA methyltransferase TrmH family.

This is an uncharacterized protein from Escherichia coli O157:H7.